The following is a 206-amino-acid chain: Cytochrome c oxidase subunit 3 (206 aa).

A run of 5 helical transmembrane segments spans residues F26–T46, L68–F88, A97–I117, L143–I163, and W185–G205.

This sequence belongs to the cytochrome c oxidase subunit 3 family.

The protein localises to the cell membrane. It carries out the reaction 4 Fe(II)-[cytochrome c] + O2 + 8 H(+)(in) = 4 Fe(III)-[cytochrome c] + 2 H2O + 4 H(+)(out). This is Cytochrome c oxidase subunit 3 (ctaE) from Alkalihalophilus pseudofirmus (strain ATCC BAA-2126 / JCM 17055 / OF4) (Bacillus pseudofirmus).